Consider the following 2342-residue polypeptide: Outer kinetochore KNL1 complex subunit KNL1 (2342 aa).

A disordered region spans residues 1 to 56; that stretch reads MDGVSSEANEENDNIERPVRRRHSSILKPPRSPLQDLRGGNERVQESNALRNKKNS. Residues 1–250 are may mediate oligomerization; the sequence is MDGVSSEANE…FNDFIKRLKT (250 aa). An interaction with BUB1 and BUB1B region spans residues 1-728; the sequence is MDGVSSEANE…QSLFSTTKPL (728 aa). Interaction with microtubules stretches follow at residues 17-34 and 53-80; these read RPVR…RSPL and KKNS…VRKS. Residues 23 to 80 are interaction with PP1CA; contains the protein phosphatase 1 (PP1) interaction motifs SILK, RVXF and phi-phi; it reads HSSILKPPRSPLQDLRGGNERVQESNALRNKKNSRRVSFADTIKVFQTESHMKIVRKS. A Phosphoserine; by AURKB modification is found at serine 24. The residue at position 32 (serine 32) is a Phosphoserine. The residue at position 60 (serine 60) is a Phosphoserine; by AURKB. Positions 174-190 are interaction with BUB1; it reads ENQMDLTSSHTVMITKG. Residues 210 to 226 are interaction with BUB1B; it reads ANLKLHTEDSRMKKEVN. A Phosphothreonine modification is found at threonine 539. Phosphoserine is present on residues serine 578 and serine 584. A Phosphothreonine modification is found at threonine 586. The segment at 620-646 is disordered; the sequence is APESTSESHSQSKSSSDECEEITKSRN. Positions 622 to 633 are enriched in low complexity; the sequence is ESTSESHSQSKS. Phosphoserine is present on serine 767. The segment at 855-1201 is 2 X 104 AA approximate repeats; the sequence is EDESVQKPKF…VTDSHTVFID (347 aa). Repeat 1 spans residues 885–989; that stretch reads DKTIVFSEDD…MTESHTVFID (105 aa). Threonine 901 bears the Phosphothreonine mark. 4 positions are modified to phosphoserine: serine 956, serine 1039, serine 1076, and serine 1088. Copy 2 of the repeat occupies 1099–1201; sequence DKTIVFSENH…VTDSHTVFID (103 aa). Serine 1448 is modified (phosphoserine). The segment at 1639–1662 is disordered; the sequence is SNAKDSRDEENKKSHNGAETTSLP. Residues 1642–1651 show a composition bias toward basic and acidic residues; that stretch reads KDSRDEENKK. 2 positions are modified to phosphoserine: serine 1675 and serine 1773. The short motif at 1789-1803 is the Nuclear localization signal element; the sequence is TWVQEEEDIHKEKKI. At serine 1831 the chain carries Phosphoserine. Phosphoserine; by TTK is present on residues serine 1831 and serine 1834. Serine 1845 and serine 1860 each carry phosphoserine. The segment at 1981–2108 is required for interaction with ZWINT; the sequence is KMRHCSDKEL…LLELEVQKEQ (128 aa). Residues 2024 to 2133 adopt a coiled-coil conformation; the sequence is VQSAQNEREK…EELLDQLSLS (110 aa). The interval 2091–2311 is interaction with NSL1, DSN1 and required for assembly into the outer kinetochore; that stretch reads EEEELQRNLL…GNTSQDDIAT (221 aa).

Component of the KNL1 complex composed of KNL1 and ZWINT. Part of the ten-subunit outer kinetochore KMN network that includes the KNL1, MIS12 and NDC80 complexes; a bioriented kinetochore contains approximately 150 copies of the network. Interacts (via C-terminus) with the MIS12 complex subunits NSL1 (via C-terminus), PMF1 and DSN1; the interaction is direct. Interacts (via N-terminal region) with BUB1B (via BUB1 N-terminal domain); the interaction is direct and is required for cell cycle arrest upon activation of the mitotic spindle assembly checkpoint. Interacts (via N-terminal region) with BUB1 (via BUB1 N-terminal domain); the interaction is direct. Interacts with the protein phosphatase PP1 subunit PPP1CA; the interaction is direct and mutually exclusive with binding to microtubules. Interacts with the protein phosphatase PP1 subunit PPP1CC; the interaction is direct and mutually exclusive with binding to microtubules. In terms of processing, phosphorylation by AURKB negatively regulates its interaction with protein phosphatase 1 (PP1) subunit PPP1CA and with microtubules. Highly expressed in testis, where it is localized in germ cells, in particular in spermatocytes and in the pre-acrosome of round spermatids. Detected in the acrosome of ejaculated spermatozoa. Detected in adult thymus, bone marrow, colon, small intestine, appendix and placenta, and in fetal liver and thymus.

It is found in the nucleus. Its subcellular location is the chromosome. The protein resides in the centromere. The protein localises to the kinetochore. It localises to the cytoplasm. Functionally, acts as a component of the outer kinetochore KNL1 complex that serves as a docking point for spindle assembly checkpoint components and mediates microtubule-kinetochore interactions. Kinetochores, consisting of a centromere-associated inner segment and a microtubule-contacting outer segment, play a crucial role in chromosome segregation by mediating the physical connection between centromeric DNA and spindle microtubules. The outer kinetochore is made up of the ten-subunit KMN network, comprising the MIS12, NDC80 and KNL1 complexes, and auxiliary microtubule-associated components; together they connect the outer kinetochore with the inner kinetochore, bind microtubules, and mediate interactions with mitotic checkpoint proteins that delay anaphase until chromosomes are bioriented on the spindle. Required for kinetochore binding by a distinct subset of kMAPs (kinetochore-bound microtubule-associated proteins) and motors. Acts in coordination with CENPK to recruit the NDC80 complex to the outer kinetochore. Can bind either to microtubules or to the protein phosphatase 1 (PP1) catalytic subunits PPP1CA and PPP1CC (via overlapping binding sites), it has higher affinity for PP1. Recruits MAD2L1 to the kinetochore and also directly links BUB1 and BUB1B to the kinetochore. In addition to orienting mitotic chromosomes, it is also essential for alignment of homologous chromosomes during meiotic metaphase I. In meiosis I, required to activate the spindle assembly checkpoint at unattached kinetochores to correct erroneous kinetochore-microtubule attachments. The chain is Outer kinetochore KNL1 complex subunit KNL1 from Homo sapiens (Human).